The sequence spans 490 residues: Protein U94 (490 aa).

The PV NS1-Nuc domain maps to 1-210 (MFSIINPSDD…SHFNKKPNVK (210 aa)).

The protein localises to the host nucleus. The protein is Protein U94 (U94) of Human herpesvirus 6A (strain Uganda-1102) (HHV-6 variant A).